The following is a 324-amino-acid chain: Endochitinase A2 (324 aa).

An N-terminal signal peptide occupies residues methionine 1–alanine 20. Residues glutamate 21–glycine 61 form the Chitin-binding type-1 domain. 4 disulfide bridges follow: cysteine 23–cysteine 38, cysteine 32–cysteine 44, cysteine 37–cysteine 51, and cysteine 55–cysteine 59. The active-site Proton donor is the glutamate 133. 2 disulfides stabilise this stretch: cysteine 151/cysteine 170 and cysteine 269/cysteine 301. A propeptide spans serine 310 to alanine 324 (removed in mature form).

Belongs to the glycosyl hydrolase 19 family. Chitinase class I subfamily.

The catalysed reaction is Random endo-hydrolysis of N-acetyl-beta-D-glucosaminide (1-&gt;4)-beta-linkages in chitin and chitodextrins.. Its function is as follows. Defense against chitin-containing fungal pathogens. The polypeptide is Endochitinase A2 (CHI2) (Pisum sativum (Garden pea)).